Here is a 565-residue protein sequence, read N- to C-terminus: CTP synthase (565 aa).

Residues 1-272 form an amidoligase domain region; the sequence is MARPKNVKHI…DLRVMKKLGL (272 aa). A CTP-binding site is contributed by S18. Residue S18 participates in UTP binding. 19–24 serves as a coordination point for ATP; sequence SLGKGI. Y59 is an L-glutamine binding site. D76 is an ATP binding site. 2 residues coordinate Mg(2+): D76 and E146. Residues 153-155, 193-198, and K229 contribute to the CTP site; these read DIE and KTKPTQ. Residues 193-198 and K229 each bind UTP; that span reads KTKPTQ. Positions 299 to 543 constitute a Glutamine amidotransferase type-1 domain; that stretch reads TIGVCGKYTE…VAAAKEYEKG (245 aa). G363 contributes to the L-glutamine binding site. The Nucleophile; for glutamine hydrolysis role is filled by C390. Residues 391–394, E414, and R471 contribute to the L-glutamine site; that span reads LGMQ. Residues H516 and E518 contribute to the active site.

Belongs to the CTP synthase family. Homotetramer.

The enzyme catalyses UTP + L-glutamine + ATP + H2O = CTP + L-glutamate + ADP + phosphate + 2 H(+). The catalysed reaction is L-glutamine + H2O = L-glutamate + NH4(+). It carries out the reaction UTP + NH4(+) + ATP = CTP + ADP + phosphate + 2 H(+). The protein operates within pyrimidine metabolism; CTP biosynthesis via de novo pathway; CTP from UDP: step 2/2. Allosterically activated by GTP, when glutamine is the substrate; GTP has no effect on the reaction when ammonia is the substrate. The allosteric effector GTP functions by stabilizing the protein conformation that binds the tetrahedral intermediate(s) formed during glutamine hydrolysis. Inhibited by the product CTP, via allosteric rather than competitive inhibition. Its function is as follows. Catalyzes the ATP-dependent amination of UTP to CTP with either L-glutamine or ammonia as the source of nitrogen. Regulates intracellular CTP levels through interactions with the four ribonucleotide triphosphates. This Chlorobium phaeobacteroides (strain DSM 266 / SMG 266 / 2430) protein is CTP synthase.